A 627-amino-acid polypeptide reads, in one-letter code: BEL1-like homeodomain protein 4 (627 aa).

Residues 206–225 form a disordered region; that stretch reads SSQHHHHQVVGHFGSSSSSP. Residues 215–225 show a composition bias toward low complexity; that stretch reads VGHFGSSSSSP. Residues 241–257 form an SR/KY domain region; that stretch reads SKYTKPAQELLEEFCSV. The interval 263–307 is disordered; the sequence is KKNKLSRNNSNPNTTGGGGGGGSSSSAGTANDSPPLSPADRIEHQ. The interval 302–373 is BELL domain; sequence DRIEHQRRKV…CLKDAVAVQL (72 aa). A DNA-binding region (homeobox) is located at residues 424–486; the sequence is AWRPQRGLPE…NARVRLWKPM (63 aa). The segment at 494–530 is disordered; it reads EAKEREEAEEENENQQQQRRQQQTNNNDTKPNNNENN. A compositionally biased stretch (low complexity) spans 507-530; it reads NQQQQRRQQQTNNNDTKPNNNENN.

It belongs to the TALE/BELL homeobox family. As to quaternary structure, may form heterodimeric complexes with TALE/KNOX proteins. Interacts with OFP1, OFP2 and OFP5. Interacts with KNATM, isoform KNATM-B. As to expression, expressed in lateral organs.

The protein resides in the nucleus. In terms of biological role, transcription factor that establishes leaf shape by repressing growth in specific subdomains of the leaf. Negatively regulates knox homeobox gene KNAT1/BP expression. The sequence is that of BEL1-like homeodomain protein 4 (BLH4) from Arabidopsis thaliana (Mouse-ear cress).